The following is a 190-amino-acid chain: Dynein axonemal light chain 1 (190 aa).

LRR repeat units lie at residues 49–70 (VCEK…NGLK), 71–92 (NLKI…EAVG), 94–115 (SLEE…HVLK), and 116–137 (KLKV…NKLQ). An LRRCT domain is found at 150 to 190 (NPLEEKHSAEGDWQDRVTKSLKALKKLDGTPIIKNDEEEED).

This sequence belongs to the dynein light chain LC1-type family. In terms of assembly, interacts with DNAH5, a outer arm dynein heavy chain. Interacts with tubulin located within the A-tubule of the outer doublets in a ATP-independent manner.

Its subcellular location is the cytoplasm. It localises to the cytoskeleton. It is found in the cilium axoneme. Part of the multisubunit axonemal ATPase complexes that generate the force for cilia motility and govern beat frequency. Component of the outer arm dynein (ODA). May be involved in a mechanosensory feedback mechanism controlling ODA activity based on external conformational cues by tethering the outer arm dynein heavy chain (DNAH5) to the microtubule within the axoneme. This Ciona intestinalis (Transparent sea squirt) protein is Dynein axonemal light chain 1 (DNAL1).